Reading from the N-terminus, the 312-residue chain is uncharacterized protein (312 aa).

An N-terminal signal peptide occupies residues 1-19; sequence MFSKYLVTASSLFVALTSA.

This is an uncharacterized protein from Saccharomyces cerevisiae (strain ATCC 204508 / S288c) (Baker's yeast).